The chain runs to 3164 residues: Large tegument protein deneddylase (3164 aa).

The interval 1 to 273 (MGGGNNTNPG…SETYLQDEAF (273 aa)) is deubiquitination activity. In terms of domain architecture, Peptidase C76 spans 45–263 (VVTGARNQFA…TAAALHLYGA (219 aa)). Active-site residues include Cys65, Asp197, and His199. The interval 289–508 (AGLGEPCVGV…GEDDGPTVPA (220 aa)) is disordered. The segment covering 308-321 (GPHPPTAAQSPPPT) has biased composition (pro residues). Residues 343–353 (PEAKRPNRAPD) show a composition bias toward basic and acidic residues. Residues 365-390 (PTDPPSADPPSADPPSAIPPPPPSAP) show a composition bias toward pro residues. Residues 416-432 (GRHRARYSAGLPKRRRP) are compositionally biased toward basic residues. The nuclear localization signal stretch occupies residues 426 to 432 (LPKRRRP). Residues 579-609 (LELCVIFFFERVLAFLIENGARTHTQAGVAG) form an interaction with inner tegument protein region. Residues 579–609 (LELCVIFFFERVLAFLIENGARTHTQAGVAG) are interaction with UL37. Disordered stretches follow at residues 2296–2318 (QTLSPSGGREASPPAPPNALYRP), 2518–2552 (HPVYQRAPDDQSPSVPNPTPGPVDLVGAEGSLGPG), and 2583–3020 (ASDD…SLSG). A compositionally biased stretch (pro residues) spans 2653-2667 (QSSPAPPDATAPRPP). The span at 2668–2680 (ASSRASAASSSGS) shows a compositional bias: low complexity. The span at 2681 to 2690 (RARRHRRARS) shows a compositional bias: basic residues. Positions 2722 to 2732 (PPAPPKPPEPA) are enriched in pro residues. Low complexity predominate over residues 2834 to 2843 (PAEPTSSSPA). Positions 2844–2866 (GPSPPPPAVQPVAPPPTSGPPPT) are enriched in pro residues. Polar residues predominate over residues 2886–2897 (TRQPVATPTTSA). A run of 35 repeats spans residues 2911–2912 (PQ), 2913–2914 (PQ), 2915–2916 (PQ), 2917–2918 (PQ), 2919–2920 (PQ), 2921–2922 (PQ), 2923–2924 (PQ), 2925–2926 (PQ), 2927–2928 (PQ), 2929–2930 (PQ), 2931–2932 (PQ), 2933–2934 (PQ), 2935–2936 (PQ), 2937–2938 (PQ), 2939–2940 (PQ), 2941–2942 (PQ), 2943–2944 (PQ), 2945–2946 (PQ), 2947–2948 (PQ), 2949–2950 (PQ), 2951–2952 (PQ), 2953–2954 (PQ), 2955–2956 (PQ), 2957–2958 (PQ), 2959–2960 (PQ), 2961–2962 (PQ), 2963–2964 (PQ), 2965–2966 (PQ), 2967–2968 (PQ), 2969–2970 (PQ), 2971–2972 (PQ), 2973–2974 (PQ), 2975–2976 (PQ), 2977–2978 (PQ), and 2979–2980 (PQ). Residues 2911–2980 (PQPQPQPQPQ…PQPQPQPQPQ (70 aa)) are 35 X 2 AA tandem repeats of P-Q. Positions 2912 to 2978 (QPQPQPQPQP…PQPQPQPQPQ (67 aa)) are enriched in pro residues. A compositionally biased stretch (polar residues) spans 2999 to 3014 (NRPSVPASASSTNPRT).

It belongs to the herpesviridae large tegument protein family. Interacts with host CUL1 and CUL4A; these interactions inhibit the E3 ligase activity of cullins. Interacts with inner tegument protein. Interacts with capsid vertex specific component CVC2. Interacts with the major capsid protein/MCP. Interacts with VP16; this interaction is important for outer tegument association to the capsid. May form homodimers. In terms of processing, proteolytically processed, possibly into several polypeptides. Enzymatic activity is only detectable following cleavage of the UL36 protein, which occurs late during viral replication.

The protein localises to the virion tegument. It is found in the host cytoplasm. It localises to the host nucleus. The catalysed reaction is Thiol-dependent hydrolysis of ester, thioester, amide, peptide and isopeptide bonds formed by the C-terminal Gly of ubiquitin (a 76-residue protein attached to proteins as an intracellular targeting signal).. Functionally, large tegument protein that plays multiple roles in the viral cycle. During viral entry, remains associated with the capsid while most of the tegument is detached and participates in the capsid transport toward the host nucleus. Plays a role in the routing of the capsid at the nuclear pore complex and subsequent uncoating. Within the host nucleus, acts as a deneddylase and promotes the degradation of nuclear CRLs (cullin-RING ubiquitin ligases) and thereby stabilizes nuclear CRL substrates, while cytoplasmic CRLs remain unaffected. These modifications prevent host cell cycle S-phase progression and create a favorable environment allowing efficient viral genome replication. Participates later in the secondary envelopment of capsids. Indeed, plays a linker role for the association of the outer viral tegument to the capsids together with the inner tegument protein. This chain is Large tegument protein deneddylase, found in Human herpesvirus 1 (strain 17) (HHV-1).